The following is a 403-amino-acid chain: Cytoplasmic tRNA 2-thiolation protein 2 (403 aa).

The protein belongs to the CTU2/NCS2 family.

The protein resides in the cytoplasm. The protein operates within tRNA modification; 5-methoxycarbonylmethyl-2-thiouridine-tRNA biosynthesis. Plays a central role in 2-thiolation of mcm(5)S(2)U at tRNA wobble positions of tRNA(Lys), tRNA(Glu) and tRNA(Gln). May act by forming a heterodimer with NCS6/CTU1 that ligates sulfur from thiocarboxylated URM1 onto the uridine of tRNAs at wobble position. In Drosophila willistoni (Fruit fly), this protein is Cytoplasmic tRNA 2-thiolation protein 2.